The sequence spans 330 residues: Phosphatidylglycerol--prolipoprotein diacylglyceryl transferase (330 aa).

The next 3 membrane-spanning stretches (helical) occupy residues 22–42, 57–77, and 97–117; these read LPIR…LVVG, YDIA…YHLA, and IWDG…GAWL. Arginine 145 provides a ligand contact to a 1,2-diacyl-sn-glycero-3-phospho-(1'-sn-glycerol). Transmembrane regions (helical) follow at residues 193–213 and 257–277; these read VVQP…FALI and INSF…ILAP.

The protein belongs to the Lgt family.

The protein localises to the cell membrane. The enzyme catalyses L-cysteinyl-[prolipoprotein] + a 1,2-diacyl-sn-glycero-3-phospho-(1'-sn-glycerol) = an S-1,2-diacyl-sn-glyceryl-L-cysteinyl-[prolipoprotein] + sn-glycerol 1-phosphate + H(+). It functions in the pathway protein modification; lipoprotein biosynthesis (diacylglyceryl transfer). Its function is as follows. Catalyzes the transfer of the diacylglyceryl group from phosphatidylglycerol to the sulfhydryl group of the N-terminal cysteine of a prolipoprotein, the first step in the formation of mature lipoproteins. The protein is Phosphatidylglycerol--prolipoprotein diacylglyceryl transferase of Mycobacterium leprae (strain Br4923).